Here is a 616-residue protein sequence, read N- to C-terminus: Dihydroxy-acid dehydratase (616 aa).

Mg(2+) is bound at residue Asp-81. Cys-122 lines the [2Fe-2S] cluster pocket. Mg(2+)-binding residues include Asp-123 and Lys-124. N6-carboxylysine is present on Lys-124. Cys-195 contributes to the [2Fe-2S] cluster binding site. Glu-491 contributes to the Mg(2+) binding site. Residue Ser-517 is the Proton acceptor of the active site.

This sequence belongs to the IlvD/Edd family. Homodimer. The cofactor is [2Fe-2S] cluster. Requires Mg(2+) as cofactor.

The catalysed reaction is (2R)-2,3-dihydroxy-3-methylbutanoate = 3-methyl-2-oxobutanoate + H2O. It catalyses the reaction (2R,3R)-2,3-dihydroxy-3-methylpentanoate = (S)-3-methyl-2-oxopentanoate + H2O. It participates in amino-acid biosynthesis; L-isoleucine biosynthesis; L-isoleucine from 2-oxobutanoate: step 3/4. Its pathway is amino-acid biosynthesis; L-valine biosynthesis; L-valine from pyruvate: step 3/4. In terms of biological role, functions in the biosynthesis of branched-chain amino acids. Catalyzes the dehydration of (2R,3R)-2,3-dihydroxy-3-methylpentanoate (2,3-dihydroxy-3-methylvalerate) into 2-oxo-3-methylpentanoate (2-oxo-3-methylvalerate) and of (2R)-2,3-dihydroxy-3-methylbutanoate (2,3-dihydroxyisovalerate) into 2-oxo-3-methylbutanoate (2-oxoisovalerate), the penultimate precursor to L-isoleucine and L-valine, respectively. This is Dihydroxy-acid dehydratase from Yersinia pseudotuberculosis serotype O:1b (strain IP 31758).